The sequence spans 315 residues: Ribosomal RNA small subunit methyltransferase H (315 aa).

Residues 36–38, Asp-56, Phe-81, Asp-103, and Gln-110 contribute to the S-adenosyl-L-methionine site; that span reads GGH.

It belongs to the methyltransferase superfamily. RsmH family.

The protein localises to the cytoplasm. It catalyses the reaction cytidine(1402) in 16S rRNA + S-adenosyl-L-methionine = N(4)-methylcytidine(1402) in 16S rRNA + S-adenosyl-L-homocysteine + H(+). Functionally, specifically methylates the N4 position of cytidine in position 1402 (C1402) of 16S rRNA. The sequence is that of Ribosomal RNA small subunit methyltransferase H from Idiomarina loihiensis (strain ATCC BAA-735 / DSM 15497 / L2-TR).